The primary structure comprises 984 residues: Translation initiation factor IF-2 (984 aa).

The disordered stretch occupies residues 32 to 402 (PAKNATSTLT…TQPQRAAKRK (371 aa)). The segment covering 89–123 (PAETEAQASPAQPEAKAAAPAAEAEEAPAAKPAPA) has biased composition (low complexity). The segment covering 126 to 136 (RKAEARTEAPR) has biased composition (basic and acidic residues). Composition is skewed to low complexity over residues 154-172 (APET…SAAP) and 187-197 (AETTESAPAEP). The span at 198-220 (AAEKAPAEKRRYEVSMEPEKDSV) shows a compositional bias: basic and acidic residues. Positions 255–270 (RPDPAAVQAQAAAAAQ) are enriched in low complexity. A compositionally biased stretch (basic and acidic residues) spans 271-283 (AREERAERPDRGP). The segment covering 308–334 (GRPAPRSGAPRPGGARPAAGFGQPAQA) has biased composition (low complexity). The region spanning 482–651 (PRPPVVTIMG…ALQAEVLELK (170 aa)) is the tr-type G domain. A G1 region spans residues 491-498 (GHVDHGKT). 491-498 (GHVDHGKT) contributes to the GTP binding site. Residues 516–520 (GITQH) form a G2 region. The segment at 537 to 540 (DTPG) is G3. Residues 537-541 (DTPGH) and 591-594 (NKID) contribute to the GTP site. Residues 591-594 (NKID) form a G4 region. Positions 627–629 (SAK) are G5.

It belongs to the TRAFAC class translation factor GTPase superfamily. Classic translation factor GTPase family. IF-2 subfamily.

It localises to the cytoplasm. In terms of biological role, one of the essential components for the initiation of protein synthesis. Protects formylmethionyl-tRNA from spontaneous hydrolysis and promotes its binding to the 30S ribosomal subunits. Also involved in the hydrolysis of GTP during the formation of the 70S ribosomal complex. The chain is Translation initiation factor IF-2 from Oleidesulfovibrio alaskensis (strain ATCC BAA-1058 / DSM 17464 / G20) (Desulfovibrio alaskensis).